A 336-amino-acid polypeptide reads, in one-letter code: HTH-type transcriptional repressor PurR (336 aa).

One can recognise an HTH lacI-type domain in the interval 2-56; sequence ATIKDVAKMAGVSTTTVSHVINKTRFVAKDTEEAVLSAIKQLNYSPSAVARSLKV. The H-T-H motif DNA-binding region spans 4–23; that stretch reads IKDVAKMAGVSTTTVSHVIN. Residues 48–56 mediate DNA binding; sequence SAVARSLKV. Positions 73, 188, 190, 219, and 273 each coordinate hypoxanthine.

As to quaternary structure, homodimer.

Its pathway is purine metabolism; purine nucleotide biosynthesis [regulation]. Functionally, is the main repressor of the genes involved in the de novo synthesis of purine nucleotides, regulating purB, purC, purEK, purF, purHD, purL, purMN and guaBA expression. PurR is allosterically activated to bind its cognate DNA by binding the purine corepressors, hypoxanthine or guanine, thereby effecting transcription repression. In Haemophilus influenzae (strain ATCC 51907 / DSM 11121 / KW20 / Rd), this protein is HTH-type transcriptional repressor PurR.